A 65-amino-acid chain; its full sequence is Hirudin-2B (65 aa).

Residues 1-3 (ITY) form an interaction with thrombin active site region. 3 disulfides stabilise this stretch: Cys6/Cys14, Cys16/Cys28, and Cys22/Cys39. A disordered region spans residues 39 to 65 (CVTGEGTPKPQSHNDGDFEEIPEEYLQ). O-linked (GalNAc...) threonine glycosylation occurs at Thr45. The interaction with fibrinogen-binding exosite of thrombin stretch occupies residues 55 to 65 (DFEEIPEEYLQ). Residues 55–65 (DFEEIPEEYLQ) are compositionally biased toward acidic residues. Position 63 is a sulfotyrosine (Tyr63).

It belongs to the protease inhibitor I14 (hirudin) family.

It localises to the secreted. Hirudin is a potent thrombin-specific protease inhibitor. It forms a stable non-covalent complex with alpha-thrombin, thereby abolishing its ability to cleave fibrinogen. In Hirudo medicinalis (Medicinal leech), this protein is Hirudin-2B.